A 393-amino-acid polypeptide reads, in one-letter code: Calreticulin (393 aa).

A signal peptide spans 1–16; sequence MLSILLTLLLSKYALG. N-linked (GlcNAc...) asparagine glycosylation occurs at N27. C103 and C135 form a disulfide bridge. An alpha-D-glucoside-binding residues include Y107, K109, Y126, and D133. Repeat copies occupy residues 189-200, 208-219, 225-236, 242-253, 257-267, 271-281, and 285-295. Residues 189–253 form a 4 X 12 AA approximate repeats region; it reads VEEGSLEDDW…DAKKPDDWDD (65 aa). The disordered stretch occupies residues 194-277; the sequence is LEDDWDMLPP…EYKGEWTPRR (84 aa). Positions 202–216 are enriched in basic and acidic residues; it reads PPKKIDDPNDKKPDD. Over residues 217–226 the composition is skewed to acidic residues; the sequence is WVDEQFIDDP. Basic and acidic residues-rich tracts occupy residues 227-249 and 258-277; these read DDKK…KKPD and EWER…TPRR. The segment at 257–295 is 3 X 11 AA approximate repeats; sequence GEWERPQKDNPEYKGEWTPRRIDNPKYKGEWKPVQIDNP. D315 contacts an alpha-D-glucoside. The segment at 351-393 is disordered; sequence AEVAKEQSSAKDDKEEAEETKERKELPYDAKASDEPSGDHDEL. Residues 390–393 carry the Prevents secretion from ER motif; sequence HDEL.

Belongs to the calreticulin family.

It localises to the endoplasmic reticulum lumen. Functionally, molecular calcium-binding chaperone promoting folding, oligomeric assembly and quality control in the ER via the calreticulin/calnexin cycle. This lectin may interact transiently with almost all of the monoglucosylated glycoproteins that are synthesized in the ER. In Schistosoma mansoni (Blood fluke), this protein is Calreticulin.